The chain runs to 96 residues: MTQSIDSMSISIYENLISTMIQDIVSREVVHQKQMQSRYPQLKQYSIDPNGNIDINGNTKQQDSSQYFHCKNCGRDVSANRFAAHLQRCLNSRQRR.

The segment at 68–89 adopts an SGF11-type zinc-finger fold; it reads FHCKNCGRDVSANRFAAHLQRC.

The protein belongs to the SGF11 family. As to quaternary structure, component of the 1.8 MDa SAGA transcription coactivator-HAT complex. SAGA is built of 5 distinct domains with specialized functions. Within the SAGA complex, SUS1, SGF11, SGF73 and UBP8 form an additional subcomplex of SAGA called the DUB module (deubiquitination module). Interacts directly with SGF73, SUS1 and UBP8.

The protein localises to the nucleus. Functions as a component of the transcription regulatory histone acetylation (HAT) complex SAGA. At the promoters, SAGA is required for recruitment of the basal transcription machinery. It influences RNA polymerase II transcriptional activity through different activities such as TBP interaction and promoter selectivity, interaction with transcription activators, and chromatin modification through histone acetylation and deubiquitination. SAGA acetylates nucleosomal histone H3 to some extent (to form H3K9ac, H3K14ac, H3K18ac and H3K23ac). SAGA interacts with DNA via upstream activating sequences (UASs). Involved in transcriptional regulation of a subset of SAGA-regulated genes. Within the SAGA complex, participates in a subcomplex, that specifically deubiquitinates histones H2B. In Vanderwaltozyma polyspora (strain ATCC 22028 / DSM 70294 / BCRC 21397 / CBS 2163 / NBRC 10782 / NRRL Y-8283 / UCD 57-17) (Kluyveromyces polysporus), this protein is SAGA-associated factor 11.